Here is a 158-residue protein sequence, read N- to C-terminus: Large ribosomal subunit protein uL22 (158 aa).

Belongs to the universal ribosomal protein uL22 family. As to quaternary structure, part of the 50S ribosomal subunit.

Its function is as follows. This protein binds specifically to 23S rRNA. It makes multiple contacts with different domains of the 23S rRNA in the assembled 50S subunit and ribosome. Functionally, the globular domain of the protein is located near the polypeptide exit tunnel on the outside of the subunit, while an extended beta-hairpin is found that lines the wall of the exit tunnel in the center of the 70S ribosome. This chain is Large ribosomal subunit protein uL22, found in Haloquadratum walsbyi (strain DSM 16790 / HBSQ001).